Consider the following 211-residue polypeptide: Pyruvate dehydrogenase E1 component subunit beta, mitochondrial (211 aa).

Phosphotyrosine is present on Tyr-31. K(+) is bound by residues Ile-48, Ala-96, Ile-97, Asp-99, and Asn-101.

In terms of assembly, heterotetramer of two PDHA1 and two PDHB subunits. The heterotetramer interacts with DLAT, and is part of the multimeric pyruvate dehydrogenase complex that contains multiple copies of pyruvate dehydrogenase (E1), dihydrolipoamide acetyltransferase (DLAT, E2) and lipoamide dehydrogenase (DLD, E3). These subunits are bound to an inner core composed of about 48 DLAT and 12 PDHX molecules. Interacts with DLAT. Requires thiamine diphosphate as cofactor.

Its subcellular location is the mitochondrion matrix. It carries out the reaction N(6)-[(R)-lipoyl]-L-lysyl-[protein] + pyruvate + H(+) = N(6)-[(R)-S(8)-acetyldihydrolipoyl]-L-lysyl-[protein] + CO2. The pyruvate dehydrogenase complex catalyzes the overall conversion of pyruvate to acetyl-CoA and CO(2), and thereby links the glycolytic pathway to the tricarboxylic cycle. The polypeptide is Pyruvate dehydrogenase E1 component subunit beta, mitochondrial (Mesocricetus auratus (Golden hamster)).